A 477-amino-acid polypeptide reads, in one-letter code: Endo-1,4-beta-xylanase A (477 aa).

Residues 1-41 (MGSYALPRSGVRRSIRVLLLALVVGVLGTATALIAPPGAHA) form the signal peptide. In terms of domain architecture, GH10 spans 42–340 (AESTLGAAAA…KAAYTAVLDA (299 aa)). Catalysis depends on E169, which acts as the Proton donor. E277 acts as the Nucleophile in catalysis. The Ricin B-type lectin domain maps to 361–477 (SGRCLDVPDA…NGSNQRWTRT (117 aa)). 3 disulfide bridges follow: C364/C383, C406/C423, and C447/C466.

Belongs to the glycosyl hydrolase 10 (cellulase F) family.

It localises to the secreted. The enzyme catalyses Endohydrolysis of (1-&gt;4)-beta-D-xylosidic linkages in xylans.. The protein operates within glycan degradation; xylan degradation. Functionally, contributes to hydrolyze hemicellulose, the major component of plant cell-walls. XLNA and XLNB seem to act sequentially on the substrate to yield xylobiose and xylose as carbon sources. The polypeptide is Endo-1,4-beta-xylanase A (xlnA) (Streptomyces lividans).